We begin with the raw amino-acid sequence, 62 residues long: Trypsin inhibitor MCI-3 (62 aa).

The protein belongs to the protease inhibitor I13 (potato type I serine protease inhibitor) family.

This Momordica charantia (Bitter gourd) protein is Trypsin inhibitor MCI-3.